We begin with the raw amino-acid sequence, 367 residues long: 2-oxoisovalerate dehydrogenase subunit alpha (367 aa).

Substrate-binding positions include Phe-66, Tyr-95, 128 to 131 (MPEH), and Ser-144. 94–96 (YYR) provides a ligand contact to thiamine diphosphate. Thiamine diphosphate is bound by residues 144-146 (SPI), 174-180 (GDGATSE), 204-208 (NFYAI), and His-273. Residues Asp-175, Asn-204, and Tyr-206 each contribute to the Mg(2+) site.

Belongs to the BCKDHA family. In terms of assembly, heterotetramer of two alpha and two beta chains. Directly associated with ODBB in the E1 complex. Requires thiamine diphosphate as cofactor.

It carries out the reaction N(6)-[(R)-lipoyl]-L-lysyl-[protein] + 3-methyl-2-oxobutanoate + H(+) = N(6)-[(R)-S(8)-2-methylpropanoyldihydrolipoyl]-L-lysyl-[protein] + CO2. Functionally, the branched-chain alpha-keto dehydrogenase complex catalyzes the overall conversion of alpha-keto acids to acyl-CoA and CO(2). It contains multiple copies of three enzymatic components: branched-chain alpha-keto acid decarboxylase (E1), lipoamide acyltransferase (E2) and lipoamide dehydrogenase (E3). In Thermus thermophilus (strain ATCC BAA-163 / DSM 7039 / HB27), this protein is 2-oxoisovalerate dehydrogenase subunit alpha.